Reading from the N-terminus, the 548-residue chain is T-complex protein 1 subunit theta (548 aa).

The interval Ala528–Ala548 is disordered.

It belongs to the TCP-1 chaperonin family. Heterooligomeric complex.

It localises to the cytoplasm. In terms of biological role, molecular chaperone; assists the folding of proteins upon ATP hydrolysis. Known to play a role, in vitro, in the folding of actin and tubulin. Required for correct subcellular localization of pgl-1. This chain is T-complex protein 1 subunit theta, found in Caenorhabditis briggsae.